The chain runs to 169 residues: Eukaryotic translation initiation factor 5A-2 (169 aa).

Lys64 carries the post-translational modification Hypusine.

Belongs to the eIF-5A family. Post-translationally, lys-51 undergoes hypusination, a unique post-translational modification that consists in the addition of a butylamino group from spermidine to lysine side chain, leading to the formation of the unusual amino acid hypusine. eIF-5As are the only known proteins to undergo this modification, which is essential for their function.

The protein localises to the cytoplasm. Its subcellular location is the nucleus. Translation factor that promotes translation elongation and termination, particularly upon ribosome stalling at specific amino acid sequence contexts. Binds between the exit (E) and peptidyl (P) site of the ribosome and promotes rescue of stalled ribosome: specifically required for efficient translation of polyproline-containing peptides as well as other motifs that stall the ribosome. Acts as a ribosome quality control (RQC) cofactor by joining the RQC complex to facilitate peptidyl transfer during CAT tailing step. This is Eukaryotic translation initiation factor 5A-2 (tif51b) from Schizosaccharomyces pombe (strain 972 / ATCC 24843) (Fission yeast).